Reading from the N-terminus, the 137-residue chain is uncharacterized protein (137 aa).

The first 34 residues, 1–34, serve as a signal peptide directing secretion; the sequence is MAALSRALGPLRTPAPPLWIGLFLVATGSQQSLA. The span at 33–45 shows a compositional bias: polar residues; the sequence is LAQPLPGNTTEAT. Disordered stretches follow at residues 33 to 54 and 98 to 137; these read LAQP…ASGS and VLSP…LGAS. N-linked (GlcNAc...) asparagine glycosylation occurs at Asn-40. Residues 121 to 137 are compositionally biased toward basic and acidic residues; sequence KLKEPQPQDHKPGLGAS.

It is found in the secreted. This is an uncharacterized protein from Homo sapiens (Human).